The sequence spans 314 residues: Secreted frizzled-related protein 1 (314 aa).

Residues Met-1 to Ala-31 form the signal peptide. One can recognise an FZ domain in the interval Thr-53–Met-169. 5 cysteine pairs are disulfide-bonded: Cys-58–Cys-121, Cys-68–Cys-114, Cys-105–Cys-140, Cys-129–Cys-166, and Cys-133–Cys-157. Asn-173 carries an N-linked (GlcNAc...) asparagine glycan. 3 disulfides stabilise this stretch: Cys-186–Cys-256, Cys-189–Cys-258, and Cys-203–Cys-306. Residues Cys-186–Cys-306 enclose the NTR domain.

It belongs to the secreted frizzled-related protein (sFRP) family. As to quaternary structure, interacts with WNT8, WNT1, WNT2, WNT4 and FRZD6. Interacts with MYOC. As to expression, highly expressed in kidney and embryonic heart. Also highly expressed in the eye, where it is principally localized to the ciliary body and the lens epithelium. Weaker expression in heart, lung and brain. In the brain, is expressed exclusively in the choroid plexus.

Its subcellular location is the secreted. Functionally, soluble frizzled-related proteins (sFRPS) function as modulators of Wnt signaling through direct interaction with Wnts. They have a role in regulating cell growth and differentiation in specific cell types. SFRP1 decreases intracellular beta-catenin levels. Has antiproliferative effects on vascular cells, in vitro and in vivo, and can induce, in vivo, an angiogenic response. In vascular cell cycle, delays the G1 phase and entry into the S phase. In kidney development, inhibits tubule formation and bud growth in metanephroi. Inhibits WNT1/WNT4-mediated TCF-dependent transcription. This Mus musculus (Mouse) protein is Secreted frizzled-related protein 1.